The chain runs to 217 residues: Small ribosomal subunit protein uS3 (217 aa).

Residues 38–106 (IRQLIQTKLA…QVHINIVEIK (69 aa)) enclose the KH type-2 domain.

The protein belongs to the universal ribosomal protein uS3 family. In terms of assembly, part of the 30S ribosomal subunit. Forms a tight complex with proteins S10 and S14.

In terms of biological role, binds the lower part of the 30S subunit head. Binds mRNA in the 70S ribosome, positioning it for translation. The polypeptide is Small ribosomal subunit protein uS3 (Lactococcus lactis subsp. lactis (strain IL1403) (Streptococcus lactis)).